The chain runs to 623 residues: Sulfite reductase [NADPH] flavoprotein alpha-component (623 aa).

The tract at residues 1–32 is disordered; the sequence is MSFQKNEYSHKNVSEDNNGQGGNPPIASPLND. In terms of domain architecture, Flavodoxin-like spans 87–225; that stretch reads LTIIFASQTG…AAEEWRKNAL (139 aa). FMN-binding positions include 93–98, 140–143, and 176–185; these read SQTGNA, STNG, and LGDSSYEFFC. One can recognise an FAD-binding FR-type domain in the interval 258 to 472; sequence QNPYTATLLT…VEHNNNFKLP (215 aa). FAD is bound by residues Thr-346, Ala-380, 410–413, 428–430, Tyr-434, and 443–446; these read RLYS, TVG, and GGAS. Residues 543–544, 549–553, and Asp-585 each bind NADP(+); these read SR and KVYVQ. Tyr-623 lines the FAD pocket.

Belongs to the NADPH-dependent sulphite reductase flavoprotein subunit CysJ family. This sequence in the N-terminal section; belongs to the flavodoxin family. The protein in the C-terminal section; belongs to the flavoprotein pyridine nucleotide cytochrome reductase family. As to quaternary structure, alpha(8)-beta(8). The alpha component is a flavoprotein, the beta component is a hemoprotein. FAD is required as a cofactor. Requires FMN as cofactor.

The enzyme catalyses hydrogen sulfide + 3 NADP(+) + 3 H2O = sulfite + 3 NADPH + 4 H(+). Its pathway is sulfur metabolism; hydrogen sulfide biosynthesis; hydrogen sulfide from sulfite (NADPH route): step 1/1. Functionally, component of the sulfite reductase complex that catalyzes the 6-electron reduction of sulfite to sulfide. This is one of several activities required for the biosynthesis of L-cysteine from sulfate. The flavoprotein component catalyzes the electron flow from NADPH -&gt; FAD -&gt; FMN to the hemoprotein component. The polypeptide is Sulfite reductase [NADPH] flavoprotein alpha-component (Vibrio parahaemolyticus serotype O3:K6 (strain RIMD 2210633)).